The sequence spans 473 residues: Photosystem II CP43 reaction center protein (473 aa).

Residues 1–14 (MKTLYSLRRFYPVE) constitute a propeptide that is removed on maturation. An N-acetylthreonine modification is found at T15. Position 15 is a phosphothreonine (T15). 5 helical membrane passes run 69-93 (LFEV…PHLA), 134-155 (LLGP…KDRN), 178-200 (KALY…RKIT), 255-275 (KPFA…LSYS), and 291-312 (WFNN…ASQA). E367 lines the [CaMn4O5] cluster pocket. A helical transmembrane segment spans residues 447–471 (RARAAAAGFEKGIDRDFEPVLSMTP).

The protein belongs to the PsbB/PsbC family. PsbC subfamily. As to quaternary structure, PSII is composed of 1 copy each of membrane proteins PsbA, PsbB, PsbC, PsbD, PsbE, PsbF, PsbH, PsbI, PsbJ, PsbK, PsbL, PsbM, PsbT, PsbX, PsbY, PsbZ, Psb30/Ycf12, at least 3 peripheral proteins of the oxygen-evolving complex and a large number of cofactors. It forms dimeric complexes. Binds multiple chlorophylls and provides some of the ligands for the Ca-4Mn-5O cluster of the oxygen-evolving complex. It may also provide a ligand for a Cl- that is required for oxygen evolution. PSII binds additional chlorophylls, carotenoids and specific lipids. is required as a cofactor.

It is found in the plastid. Its subcellular location is the chloroplast thylakoid membrane. One of the components of the core complex of photosystem II (PSII). It binds chlorophyll and helps catalyze the primary light-induced photochemical processes of PSII. PSII is a light-driven water:plastoquinone oxidoreductase, using light energy to abstract electrons from H(2)O, generating O(2) and a proton gradient subsequently used for ATP formation. In Lactuca sativa (Garden lettuce), this protein is Photosystem II CP43 reaction center protein.